The following is a 647-amino-acid chain: Protein cueball (647 aa).

The signal sequence occupies residues 1 to 22; it reads MLWCPSVLVPLIAVAACLPVLA. The Extracellular segment spans residues 23 to 534; the sequence is IGTPLEWEFA…CMTPSPWTSN (512 aa). Residues asparagine 80 and asparagine 106 are each glycosylated (N-linked (GlcNAc...) asparagine). LDL-receptor class B repeat units follow at residues 119-166, 167-211, and 212-257; these read RNLF…DVCR, RKLY…DQLS, and DRIF…TNDA. N-linked (GlcNAc...) asparagine glycosylation is present at asparagine 175. An N-linked (GlcNAc...) asparagine glycan is attached at asparagine 316. 2 EGF-like domains span residues 365 to 401 and 436 to 473; these read DEKTAQLERDHCLNGGTYIADRVLCICPTGFKGSRCE and EISKCSGLCLNGGHCKLEDISEKPSCECPHNFAGERCE. Disulfide bonds link cysteine 376/cysteine 389, cysteine 391/cysteine 400, cysteine 440/cysteine 450, cysteine 444/cysteine 461, and cysteine 463/cysteine 472. N-linked (GlcNAc...) asparagine glycosylation is present at asparagine 475. The chain crosses the membrane as a helical span at residues 535-555; that stretch reads VIIVLVLGIVSCFFLVAVIVH. Residues 556–647 lie on the Cytoplasmic side of the membrane; it reads GFRRLYKPKR…LIHNMDDDLY (92 aa).

This sequence belongs to the cueball family.

It is found in the cell membrane. Its function is as follows. Has a role in spermatogenesis and oogenesis. The polypeptide is Protein cueball (Drosophila persimilis (Fruit fly)).